A 176-amino-acid chain; its full sequence is Probable inosine/xanthosine triphosphatase (176 aa).

Aspartate 36 is a Mg(2+) binding site.

It belongs to the YjjX NTPase family. As to quaternary structure, homodimer. Mg(2+) serves as cofactor. The cofactor is Mn(2+).

The enzyme catalyses XTP + H2O = XDP + phosphate + H(+). It catalyses the reaction ITP + H2O = IDP + phosphate + H(+). Its function is as follows. Phosphatase that hydrolyzes non-canonical purine nucleotides such as XTP and ITP to their respective diphosphate derivatives. Probably excludes non-canonical purines from DNA/RNA precursor pool, thus preventing their incorporation into DNA/RNA and avoiding chromosomal lesions. The polypeptide is Probable inosine/xanthosine triphosphatase (Saccharolobus islandicus (strain M.16.4 / Kamchatka #3) (Sulfolobus islandicus)).